The primary structure comprises 441 residues: Sec-independent protein translocase protein TatCo (441 aa).

The interval 1–185 (MADEERDAGL…LVGEAPESDQ (185 aa)) is disordered. Residues 13–22 (ADDETDASDD) are compositionally biased toward acidic residues. Residues 51-62 (TPRDETVTHGSD) are compositionally biased toward basic and acidic residues. The segment covering 75 to 104 (DNGDDSDSDTDAAPDDADDSATDSDADSDD) has biased composition (acidic residues). The segment covering 105 to 117 (EPRLLADDEHTSH) has biased composition (basic and acidic residues). Acidic residues-rich tracts occupy residues 122-138 (TYDD…DPDA) and 164-173 (EDADFDDEDV). Transmembrane regions (helical) follow at residues 200 to 220 (LAVV…GADI), 276 to 296 (VAGL…TYLF), 317 to 337 (LVLA…AIFA), 357 to 377 (FNLI…PLFV), 395 to 415 (RLLF…DPTG), and 416 to 436 (MAPI…LAAL).

This sequence belongs to the TatC family. In terms of assembly, forms a complex with TatA.

It is found in the cell membrane. Functionally, part of the twin-arginine translocation (Tat) system that transports large folded proteins containing a characteristic twin-arginine motif in their signal peptide across membranes. This Haloferax volcanii (strain ATCC 29605 / DSM 3757 / JCM 8879 / NBRC 14742 / NCIMB 2012 / VKM B-1768 / DS2) (Halobacterium volcanii) protein is Sec-independent protein translocase protein TatCo.